The sequence spans 579 residues: Probable zinc metalloprotease EGY1, chloroplastic (579 aa).

2 disordered regions span residues 1–42 (MAAA…PASA) and 78–146 (GGGG…NEPP). A chloroplast-targeting transit peptide spans 1–44 (MAAAAAALASSPMVHLTASRLRLPRPARSPAAATPSPSPASAAC). Residues 16 to 42 (LTASRLRLPRPARSPAAATPSPSPASA) show a composition bias toward low complexity. The segment covering 78-92 (GGGGGGGGGGGGTGG) has biased composition (gly residues). 2 stretches are compositionally biased toward low complexity: residues 104 to 115 (AAAAEAKVGGAV) and 125 to 137 (SGSF…SSSG). A run of 8 helical transmembrane segments spans residues 272–292 (YVIS…LGIA), 321–341 (LLPF…IQLF), 357–377 (LSIP…ITQF), 392–412 (MAGP…GLLL), 419–439 (ASDL…LGLV), 452–472 (ATVA…TTAF), 505–525 (LLGL…YVLI), and 547–567 (AALI…WDEL).

This sequence belongs to the peptidase M50B family.

It is found in the plastid. It localises to the chloroplast membrane. Functionally, probable membrane-associated metalloprotease that may be involved in chloroplast development. The sequence is that of Probable zinc metalloprotease EGY1, chloroplastic (EGY1) from Oryza sativa subsp. japonica (Rice).